Consider the following 112-residue polypeptide: Lutropin subunit beta (112 aa).

Cystine bridges form between C4–C52, C18–C67, C21–C105, C29–C83, C33–C85, and C88–C95. N-linked (GlcNAc...) asparagine glycosylation occurs at N8.

The protein belongs to the glycoprotein hormones subunit beta family. In terms of assembly, heterodimer of a common alpha chain and a unique beta chain which confers biological specificity to thyrotropin, lutropin, follitropin and gonadotropin.

Its subcellular location is the secreted. In Aquarana catesbeiana (American bullfrog), this protein is Lutropin subunit beta (lhb).